Consider the following 108-residue polypeptide: Small ribosomal subunit protein eS25A (108 aa).

Positions 1–20 (MPPKQQLSKAAKAAAALAGG) are enriched in low complexity. The segment at 1 to 30 (MPPKQQLSKAAKAAAALAGGKKSKKKWSKK) is disordered. Proline 2 is modified (n,N-dimethylproline; by NTM1). The span at 21–30 (KKSKKKWSKK) shows a compositional bias: basic residues.

It belongs to the eukaryotic ribosomal protein eS25 family. Component of the small ribosomal subunit (SSU). Mature yeast ribosomes consist of a small (40S) and a large (60S) subunit. The 40S small subunit contains 1 molecule of ribosomal RNA (18S rRNA) and 33 different proteins (encoded by 57 genes). The large 60S subunit contains 3 rRNA molecules (25S, 5.8S and 5S rRNA) and 46 different proteins (encoded by 81 genes).

It is found in the cytoplasm. Functionally, component of the ribosome, a large ribonucleoprotein complex responsible for the synthesis of proteins in the cell. The small ribosomal subunit (SSU) binds messenger RNAs (mRNAs) and translates the encoded message by selecting cognate aminoacyl-transfer RNA (tRNA) molecules. The large subunit (LSU) contains the ribosomal catalytic site termed the peptidyl transferase center (PTC), which catalyzes the formation of peptide bonds, thereby polymerizing the amino acids delivered by tRNAs into a polypeptide chain. The nascent polypeptides leave the ribosome through a tunnel in the LSU and interact with protein factors that function in enzymatic processing, targeting, and the membrane insertion of nascent chains at the exit of the ribosomal tunnel. The polypeptide is Small ribosomal subunit protein eS25A (Saccharomyces cerevisiae (strain ATCC 204508 / S288c) (Baker's yeast)).